A 145-amino-acid polypeptide reads, in one-letter code: Cuticle protein 5 (145 aa).

The sequence is that of Cuticle protein 5 from Blaberus craniifer (Death's head cockroach).